Here is a 1014-residue protein sequence, read N- to C-terminus: Exportin-T (1014 aa).

The protein belongs to the exportin family.

It is found in the nucleus. The protein resides in the cytoplasm. Functionally, tRNA nucleus export receptor which facilitates tRNA translocation across the nuclear pore complex. Involved in pre-tRNA splicing, probably by affecting the interaction of pre-tRNA with splicing endonuclease. The sequence is that of Exportin-T (LOS1) from Podospora anserina (strain S / ATCC MYA-4624 / DSM 980 / FGSC 10383) (Pleurage anserina).